We begin with the raw amino-acid sequence, 1647 residues long: Ras GTPase-activating-like protein IQG1 (1647 aa).

The disordered stretch occupies residues 18–51 (DTTATTTTTTTSNVLQPSNRLNSPTKFNRKSLDN). The span at 19–28 (TTATTTTTTT) shows a compositional bias: low complexity. Residues 29 to 43 (SNVLQPSNRLNSPTK) show a composition bias toward polar residues. Ser48 carries the phosphoserine modification. Phosphothreonine is present on residues Thr66, Thr72, and Thr82. Phosphoserine is present on residues Ser83, Ser91, and Ser139. Over residues 143 to 162 (FNTQSNVHTPLKQLNQPIGT) the composition is skewed to polar residues. Residues 143 to 175 (FNTQSNVHTPLKQLNQPIGTPSSSSLSPAKNAS) form a disordered region. The segment covering 163–175 (PSSSSLSPAKNAS) has biased composition (low complexity). Phosphoserine is present on residues Ser165, Ser167, and Ser169. Residues 184 to 291 (LCRIEAIKQW…FCLHALSYIL (108 aa)) enclose the Calponin-homology (CH) domain. Residues 326–427 (PLPNFSSADT…STSNAKLELH (102 aa)) form a disordered region. Over residues 342–355 (TSNNNSSTTSATAA) the composition is skewed to low complexity. Thr367 carries the post-translational modification Phosphothreonine. Residues 368–379 (PSPLKRPQQLQK) are compositionally biased toward low complexity. Ser369 is modified (phosphoserine). 2 stretches are compositionally biased toward basic and acidic residues: residues 380–392 (KQLE…KPEL) and 402–413 (ISRDDPFTDRVD). Ser433 and Ser440 each carry phosphoserine. IQ domains follow at residues 467–478 (FQSLARGAVFRY), 528–539 (LQSIIRKNFVIN), 556–567 (LQSLIRGKLTRD), 586–597 (FQSLVRMKSIYS), 616–627 (LQSIARSQLYHR), 642–653 (IQSIIRRNAVIE), 672–683 (LQSIARGGVART), 734–745 (VQTLFRGVLSRY), and 764–775 (LQSVARGKLMRG). Residues 841 to 919 (LSDLKDLIIE…KKIELWQTLF (79 aa)) adopt a coiled-coil conformation. A Ras-GAP domain is found at 958–1223 (PVRDSSITYH…DTVKSIISQA (266 aa)). Phosphoserine occurs at positions 1064, 1068, 1088, 1383, and 1385.

Interacts with myosin MYO1 and its light chain MLC1. Interacts with BNI1. Interacts with BNR1. Interacts with CLB2. Interacts with CLB4. Interacts with CDC28. Hyperphosphorylated. Phosphorylation is cell cycle-dependent and peaks at the time of cytokinesis. Contains 21 consensus sites for cyclin-dependent kinases (CDKs). At least some of them are phosphorylated by the CLB2-CDC28 kinase complex. Mutation of 15 of the phosphorylation sites to Ala caused both premature assembly and delayed disassembly of the actomyosin ring, blocked interaction with the actin-nucleating proteins BNI1 and BNR1, and resulted in defects in cytokinesis.

Its subcellular location is the bud neck. In terms of biological role, required for the assembly and the contraction of the actomyosin ring at the bud neck during cytokinesis. In Candida albicans (strain SC5314 / ATCC MYA-2876) (Yeast), this protein is Ras GTPase-activating-like protein IQG1 (IQG1).